The sequence spans 486 residues: E3 ubiquitin-protein ligase TRIM50 (486 aa).

The RING-type zinc finger occupies 16-57; that stretch reads CPVCLEVFKEPLMLQCGHSYCKGCLLSLSRHLDSELRCPVCR. A B box-type zinc finger spans residues 84–125; it reads PEPQVCTHHRNPLSLFCEKDQELICGLCGLLGSHQHHRVTPV. Positions 89, 92, 111, and 117 each coordinate Zn(2+). 2 coiled-coil regions span residues 125-170 and 204-235; these read VSTV…ESDV and LVASLDMQLEQARGAQERLAQATCMLEQFGNE. The region spanning 275–474 is the B30.2/SPRY domain; sequence DIKLTVWKRL…LPMVLPLPSG (200 aa). The residue at position 372 (K372) is an N6-acetyllysine.

It belongs to the TRIM/RBCC family. As to quaternary structure, can form dimers and trimers. Interacts with several E2 ubiquitin-conjugating enzymes, including UBE2L6, UBE2E1, UBE2E3. No interaction with UBE2H. Interacts with BECN1. Interacts with SQSTM1. Interacts with NLRP3. In terms of processing, auto-ubiquitinated. Acetylated by EP300 and KAT2B. HDAC6 drives TRIM50 deacetylation. Acetylation antagonizes with TRIM50 ubiquitination.

The protein resides in the cytoplasm. The catalysed reaction is S-ubiquitinyl-[E2 ubiquitin-conjugating enzyme]-L-cysteine + [acceptor protein]-L-lysine = [E2 ubiquitin-conjugating enzyme]-L-cysteine + N(6)-ubiquitinyl-[acceptor protein]-L-lysine.. Functionally, E3 ubiquitin-protein ligase that ubiquitinates Beclin-1/BECN1 in a 'Lys-63'-dependent manner enhancing its binding to ULK1. In turn, promotes starvation-induced autophagy activation. Also interacts with p62/SQSTM1 protein and thereby induces the formation and the autophagy clearance of aggresome-associated polyubiquitinated proteins through HDAC6 interaction. Also promotes NLRP3 inflammasome activation by directly inducing NLRP3 oligomerization independent of its E3 ligase function. In Sus scrofa (Pig), this protein is E3 ubiquitin-protein ligase TRIM50 (TRIM50).